The sequence spans 163 residues: Calcium-binding protein 2 (163 aa).

Gly2 carries N-myristoyl glycine lipidation. 4 EF-hand domains span residues Glu21 to Met56, Gly72 to Ala89, Ile95 to Glu130, and Leu132 to Arg163. Ca(2+) contacts are provided by Asp34, Asp36, Asp38, Tyr40, and Glu45. Residues Asp108, Asn110, Asp112, Cys114, Glu119, Asp145, Asn147, Asp149, and Glu156 each coordinate Ca(2+).

The protein resides in the cytoplasm. The protein localises to the perinuclear region. Its subcellular location is the cell membrane. It localises to the golgi apparatus. In terms of biological role, required for sound encoding at inner hair cells (IHCs) synapses, likely via inhibition of the inactivation of voltage-gated calcium channel of type 1.3 (Cav1.3) in the IHCs. Required for the normal transfer of light signals through the retina. The protein is Calcium-binding protein 2 (CABP2) of Bos taurus (Bovine).